The following is a 333-amino-acid chain: Probable pyridoxal reductase 2 (333 aa).

The Proton donor role is filled by tyrosine 52.

The protein belongs to the aldo/keto reductase family.

The protein localises to the cytoplasm. It catalyses the reaction pyridoxine + NADP(+) = pyridoxal + NADPH + H(+). Catalyzes the reduction of pyridoxal (PL) with NADPH and oxidation of pyridoxine (PN) with NADP(+). The protein is Probable pyridoxal reductase 2 of Schizosaccharomyces pombe (strain 972 / ATCC 24843) (Fission yeast).